A 120-amino-acid chain; its full sequence is Cytochrome c6 (120 aa).

The signal sequence occupies residues 1–35 (MFKLFNQASRIFFGIALPCLIFLGGIFSLGNTALA). C49, C52, H53, and M93 together coordinate heme c.

This sequence belongs to the cytochrome c family. PetJ subfamily. Monomer. In terms of processing, binds 1 heme c group covalently per subunit.

The protein localises to the cellular thylakoid lumen. Functions as an electron carrier between membrane-bound cytochrome b6-f and photosystem I in oxygenic photosynthesis. The sequence is that of Cytochrome c6 (petJ) from Synechocystis sp. (strain ATCC 27184 / PCC 6803 / Kazusa).